Consider the following 239-residue polypeptide: 1-(5-phosphoribosyl)-5-[(5-phosphoribosylamino)methylideneamino] imidazole-4-carboxamide isomerase (239 aa).

Residue Asp9 is the Proton acceptor of the active site. Asp131 serves as the catalytic Proton donor.

This sequence belongs to the HisA/HisF family.

Its subcellular location is the cytoplasm. It catalyses the reaction 1-(5-phospho-beta-D-ribosyl)-5-[(5-phospho-beta-D-ribosylamino)methylideneamino]imidazole-4-carboxamide = 5-[(5-phospho-1-deoxy-D-ribulos-1-ylimino)methylamino]-1-(5-phospho-beta-D-ribosyl)imidazole-4-carboxamide. Its pathway is amino-acid biosynthesis; L-histidine biosynthesis; L-histidine from 5-phospho-alpha-D-ribose 1-diphosphate: step 4/9. The sequence is that of 1-(5-phosphoribosyl)-5-[(5-phosphoribosylamino)methylideneamino] imidazole-4-carboxamide isomerase from Bacteroides fragilis (strain YCH46).